We begin with the raw amino-acid sequence, 327 residues long: MPHLAELVANAKAAVEDAQDVAALDLVRVEYLGKKGHFTLQMQSLRDVPAEDRPAAGAVINQAKQAVQEALNARKNALESAALNERLAAETIDVSLPGRRMENGGLHPVTRTIDRIEAFFGELGFSVETGPEIEDDYHNFDALNIPGHHPARADHDTFWFDATRLLRTQTSGVQIRTMKEQQPPIRIIAPGRVYRNDYDQTHTPMFHQMEGLIVDKDISFTNLKGTLHDFLNNFFEEDLQVRFRPSYFPFTEPSAEVDVMGKNGKWLEVLGCGMVHPNVLRNVGIDPEVYSGFAFGMGMERLTMLRYGVTDLRAFFENDLRFLKQFK.

A Mg(2+)-binding site is contributed by Glu-252.

The protein belongs to the class-II aminoacyl-tRNA synthetase family. Phe-tRNA synthetase alpha subunit type 1 subfamily. Tetramer of two alpha and two beta subunits. Mg(2+) serves as cofactor.

It is found in the cytoplasm. It catalyses the reaction tRNA(Phe) + L-phenylalanine + ATP = L-phenylalanyl-tRNA(Phe) + AMP + diphosphate + H(+). The sequence is that of Phenylalanine--tRNA ligase alpha subunit from Serratia proteamaculans (strain 568).